A 208-amino-acid polypeptide reads, in one-letter code: uncharacterized protein (208 aa).

This is an uncharacterized protein from Ureaplasma parvum serovar 3 (strain ATCC 700970).